The chain runs to 166 residues: Large ribosomal subunit protein bL17 (166 aa).

Residues 122–166 (PESAPVKAKQDRSKRVRGSKKTQEGSEKAEVSASAGEAAAVTEEK) form a disordered region. A compositionally biased stretch (basic and acidic residues) spans 142–151 (KTQEGSEKAE). Low complexity predominate over residues 152 to 166 (VSASAGEAAAVTEEK).

The protein belongs to the bacterial ribosomal protein bL17 family. Part of the 50S ribosomal subunit. Contacts protein L32.

This is Large ribosomal subunit protein bL17 from Chlorobium phaeobacteroides (strain BS1).